A 299-amino-acid polypeptide reads, in one-letter code: Ig alpha chain C region (299 aa).

Ig-like domains lie at 71–167 (PSLS…ATIS) and 174–276 (PQVH…KTID).

In terms of biological role, ig alpha is the major immunoglobulin class in body secretions. It may serve both to defend against local infection and to prevent access of foreign antigens to the general immunologic system. In Oryctolagus cuniculus (Rabbit), this protein is Ig alpha chain C region.